We begin with the raw amino-acid sequence, 94 residues long: Small ribosomal subunit protein uS19 (94 aa).

It belongs to the universal ribosomal protein uS19 family.

In terms of biological role, protein S19 forms a complex with S13 that binds strongly to the 16S ribosomal RNA. The protein is Small ribosomal subunit protein uS19 of Natranaerobius thermophilus (strain ATCC BAA-1301 / DSM 18059 / JW/NM-WN-LF).